Here is a 399-residue protein sequence, read N- to C-terminus: MNIHEYQAKALLREFGVPVSRGVPVLQASEAEAAAETLGGPVWVVKSQIHAGGRGKGKFKEASAGEKGGVRLARSIDEVKTFAGQMLGATLVTAQTGPAGKQVNRLYIEEGSDIDKEFYFSALVDRETSRISFVVSTEGGMNIEEVAHKTPEKIVTFSVDPATGVMSHHGRTVARALRLRGDLGKQAEKLVTQLYDAFIARDMAMLEINPLVVTKQGELRVLDAKISFDSNALYRHSDVVALRDESEEDAKEIEASRFDLSYVALDGQIGCMVNGAGLAMATMDIIKLYGMAPANFLDVGGGATKDKVAAAFKIITADPNVKGILINIFGGIMKCDVIADGVVAAVKQVGLNVPLVVRLEGTNVDAGKKIIRESGLNVLPADDLDDAAQKIVKAVKEVA.

Residues lysine 9–glutamate 254 form the ATP-grasp domain. ATP-binding positions include lysine 46, glycine 53 to glycine 55, glutamate 109, serine 112, and glutamate 117. Residues asparagine 209 and aspartate 223 each coordinate Mg(2+). Residues asparagine 274 and glycine 331–methionine 333 contribute to the substrate site.

Belongs to the succinate/malate CoA ligase beta subunit family. In terms of assembly, heterotetramer of two alpha and two beta subunits. Mg(2+) is required as a cofactor.

It catalyses the reaction succinate + ATP + CoA = succinyl-CoA + ADP + phosphate. It carries out the reaction GTP + succinate + CoA = succinyl-CoA + GDP + phosphate. Its pathway is carbohydrate metabolism; tricarboxylic acid cycle; succinate from succinyl-CoA (ligase route): step 1/1. In terms of biological role, succinyl-CoA synthetase functions in the citric acid cycle (TCA), coupling the hydrolysis of succinyl-CoA to the synthesis of either ATP or GTP and thus represents the only step of substrate-level phosphorylation in the TCA. The beta subunit provides nucleotide specificity of the enzyme and binds the substrate succinate, while the binding sites for coenzyme A and phosphate are found in the alpha subunit. The protein is Succinate--CoA ligase [ADP-forming] subunit beta of Nitrobacter winogradskyi (strain ATCC 25391 / DSM 10237 / CIP 104748 / NCIMB 11846 / Nb-255).